The following is a 277-amino-acid chain: NH(3)-dependent NAD(+) synthetase (277 aa).

Position 46–53 (46–53 (GISGGQDS)) interacts with ATP. Position 52 (D52) interacts with Mg(2+). R141 contacts deamido-NAD(+). T161 is an ATP binding site. E166 provides a ligand contact to Mg(2+). Residues K174 and D181 each contribute to the deamido-NAD(+) site. 2 residues coordinate ATP: K190 and T212. Position 262-263 (262-263 (HK)) interacts with deamido-NAD(+).

Belongs to the NAD synthetase family. As to quaternary structure, homodimer.

It carries out the reaction deamido-NAD(+) + NH4(+) + ATP = AMP + diphosphate + NAD(+) + H(+). It participates in cofactor biosynthesis; NAD(+) biosynthesis; NAD(+) from deamido-NAD(+) (ammonia route): step 1/1. Catalyzes the ATP-dependent amidation of deamido-NAD to form NAD. Uses ammonia as a nitrogen source. This is NH(3)-dependent NAD(+) synthetase from Corynebacterium efficiens (strain DSM 44549 / YS-314 / AJ 12310 / JCM 11189 / NBRC 100395).